The primary structure comprises 198 residues: Putative 3-methyladenine DNA glycosylase (198 aa).

Belongs to the DNA glycosylase MPG family.

This Rhizobium johnstonii (strain DSM 114642 / LMG 32736 / 3841) (Rhizobium leguminosarum bv. viciae) protein is Putative 3-methyladenine DNA glycosylase.